Reading from the N-terminus, the 69-residue chain is Beta-defensin 122 (69 aa).

The N-terminal stretch at 1–19 is a signal peptide; the sequence is MKPFLVTLAVLLLFFQVTA. 3 disulfide bridges follow: C26–C53, C33–C47, and C37–C54.

The protein belongs to the beta-defensin family.

It localises to the secreted. In terms of biological role, has antibacterial activity. The sequence is that of Beta-defensin 122 (DEFB122) from Macaca mulatta (Rhesus macaque).